The primary structure comprises 535 residues: Phosphoenolpyruvate carboxykinase (ATP) (535 aa).

Substrate is bound by residues Arg-59, Tyr-201, and Lys-207. ATP is bound by residues Lys-207, His-226, and 243–251 (GLSGTGKTT). Residues Lys-207 and His-226 each coordinate Mn(2+). Asp-264 is a Mn(2+) binding site. Residues Glu-292, Arg-328, 444 to 445 (RI), and Thr-450 contribute to the ATP site. Arg-328 contacts substrate.

It belongs to the phosphoenolpyruvate carboxykinase (ATP) family. Mn(2+) serves as cofactor.

Its subcellular location is the cytoplasm. It carries out the reaction oxaloacetate + ATP = phosphoenolpyruvate + ADP + CO2. It participates in carbohydrate biosynthesis; gluconeogenesis. Functionally, involved in the gluconeogenesis. Catalyzes the conversion of oxaloacetate (OAA) to phosphoenolpyruvate (PEP) through direct phosphoryl transfer between the nucleoside triphosphate and OAA. In Porphyromonas gingivalis (strain ATCC BAA-308 / W83), this protein is Phosphoenolpyruvate carboxykinase (ATP).